We begin with the raw amino-acid sequence, 295 residues long: 4-diphosphocytidyl-2-C-methyl-D-erythritol kinase (295 aa).

Residue Lys22 is part of the active site. Pro106 to Ser116 serves as a coordination point for ATP. The active site involves Asp148.

This sequence belongs to the GHMP kinase family. IspE subfamily.

The enzyme catalyses 4-CDP-2-C-methyl-D-erythritol + ATP = 4-CDP-2-C-methyl-D-erythritol 2-phosphate + ADP + H(+). The protein operates within isoprenoid biosynthesis; isopentenyl diphosphate biosynthesis via DXP pathway; isopentenyl diphosphate from 1-deoxy-D-xylulose 5-phosphate: step 3/6. In terms of biological role, catalyzes the phosphorylation of the position 2 hydroxy group of 4-diphosphocytidyl-2C-methyl-D-erythritol. The chain is 4-diphosphocytidyl-2-C-methyl-D-erythritol kinase from Xanthomonas oryzae pv. oryzae (strain MAFF 311018).